The sequence spans 233 residues: 2-C-methyl-D-erythritol 4-phosphate cytidylyltransferase (233 aa).

The protein belongs to the IspD/TarI cytidylyltransferase family. IspD subfamily.

It catalyses the reaction 2-C-methyl-D-erythritol 4-phosphate + CTP + H(+) = 4-CDP-2-C-methyl-D-erythritol + diphosphate. Its pathway is isoprenoid biosynthesis; isopentenyl diphosphate biosynthesis via DXP pathway; isopentenyl diphosphate from 1-deoxy-D-xylulose 5-phosphate: step 2/6. In terms of biological role, catalyzes the formation of 4-diphosphocytidyl-2-C-methyl-D-erythritol from CTP and 2-C-methyl-D-erythritol 4-phosphate (MEP). This is 2-C-methyl-D-erythritol 4-phosphate cytidylyltransferase from Aromatoleum aromaticum (strain DSM 19018 / LMG 30748 / EbN1) (Azoarcus sp. (strain EbN1)).